Here is a 585-residue protein sequence, read N- to C-terminus: 3-hydroxy-3-methylglutaryl-coenzyme A reductase 1 (585 aa).

Helical transmembrane passes span 38-58 and 77-97; these read LYLTNAVFFTLFFSAVYFLLC and EIVAILASVASFIYLLGFFGI. The interval 98–169 is linker; that stretch reads DFVQSLVLRP…DEMPVTVMTE (72 aa). The catalytic stretch occupies residues 170-585; the sequence is EDEEIIRSVV…SSKDVSKVSS (416 aa). E264 serves as the catalytic Charge relay system. Residue N328 is glycosylated (N-linked (GlcNAc...) asparagine). Residue K396 is the Charge relay system of the active site. The N-linked (GlcNAc...) asparagine glycan is linked to N441. D472 functions as the Charge relay system in the catalytic mechanism. The Proton donor role is filled by H570. A glycan (N-linked (GlcNAc...) asparagine) is linked at N574.

It belongs to the HMG-CoA reductase family.

Its subcellular location is the endoplasmic reticulum membrane. It is found in the mitochondrion membrane. The protein resides in the plastid membrane. The catalysed reaction is (R)-mevalonate + 2 NADP(+) + CoA = (3S)-3-hydroxy-3-methylglutaryl-CoA + 2 NADPH + 2 H(+). The protein operates within metabolic intermediate biosynthesis; (R)-mevalonate biosynthesis; (R)-mevalonate from acetyl-CoA: step 3/3. Functionally, catalyzes the synthesis of mevalonate. The specific precursor of all isoprenoid compounds present in plants. In Gossypium hirsutum (Upland cotton), this protein is 3-hydroxy-3-methylglutaryl-coenzyme A reductase 1 (HMG1).